The sequence spans 291 residues: 4-hydroxy-tetrahydrodipicolinate synthase (291 aa).

Position 44 (Thr44) interacts with pyruvate. The active-site Proton donor/acceptor is the Tyr132. Lys160 functions as the Schiff-base intermediate with substrate in the catalytic mechanism. Val202 is a binding site for pyruvate.

It belongs to the DapA family. As to quaternary structure, homotetramer; dimer of dimers.

It is found in the cytoplasm. It catalyses the reaction L-aspartate 4-semialdehyde + pyruvate = (2S,4S)-4-hydroxy-2,3,4,5-tetrahydrodipicolinate + H2O + H(+). Its pathway is amino-acid biosynthesis; L-lysine biosynthesis via DAP pathway; (S)-tetrahydrodipicolinate from L-aspartate: step 3/4. In terms of biological role, catalyzes the condensation of (S)-aspartate-beta-semialdehyde [(S)-ASA] and pyruvate to 4-hydroxy-tetrahydrodipicolinate (HTPA). The protein is 4-hydroxy-tetrahydrodipicolinate synthase of Clostridium perfringens (strain ATCC 13124 / DSM 756 / JCM 1290 / NCIMB 6125 / NCTC 8237 / Type A).